A 229-amino-acid chain; its full sequence is Thymidylate kinase (229 aa).

9–16 is a binding site for ATP; sequence GPEGSGKS.

It belongs to the thymidylate kinase family.

The enzyme catalyses dTMP + ATP = dTDP + ADP. Functionally, phosphorylation of dTMP to form dTDP in both de novo and salvage pathways of dTTP synthesis. The protein is Thymidylate kinase of Roseiflexus castenholzii (strain DSM 13941 / HLO8).